The following is a 443-amino-acid chain: MDRARLWLGLLLPVVAALDFRYHHQEGMEAFLKSVAQNYSSITHLHSIGKSVRGRNLWVLVVGQTPKEHRVGIPEFKYVANMHGDETVGRELLLHLIDYLVSSYRKDPEITHLIDSTRIHIMPSMNPDGFEAVQKPDCYYSNGRENYNNYDLNRNFPDAFENNNVTKQPETLAIMEWLKTETFVLSANLHGGALVASYPFDNGVQATGTLLSRSLTPDDDVFQHLAYTYASRNPNMTKGDQCKNKRNFPNGIINGYSWYPLQGGMQDYNYIWAQCFEITLELSCCKYPREEKLPLFWNDNKASLIEYIKQVHLGVKGQVFDQSGAPLPNVIVEVQDRKHICPFRTNKLGEYYLLLLPGSYVINVTVPGHDSYLTKLTIPGKSQPFSALKKDFHLPLRWQPDSISVSNPSCPMIPLYKFMPSHSAATKPSLGVFFMTLLYVFFK.

The N-terminal stretch at 1-17 (MDRARLWLGLLLPVVAA) is a signal peptide. In terms of domain architecture, Peptidase M14 spans 21-311 (RYHHQEGMEA…ASLIEYIKQV (291 aa)). Asn38 carries an N-linked (GlcNAc...) asparagine glycan. The Zn(2+) site is built by His83 and Glu86. 3 disulfides stabilise this stretch: Cys138-Cys285, Cys242-Cys284, and Cys341-Cys410. Asn164 is a glycosylation site (N-linked (GlcNAc...) asparagine). Position 190 (His190) interacts with Zn(2+). Residue Glu281 is the Proton donor/acceptor of the active site. N-linked (GlcNAc...) asparagine glycosylation is present at Asn363. Ser423 carries GPI-anchor amidated serine lipidation. Residues 424-443 (AATKPSLGVFFMTLLYVFFK) constitute a propeptide, removed in mature form.

This sequence belongs to the peptidase M14 family. Zn(2+) is required as a cofactor.

It is found in the cell membrane. It carries out the reaction Cleavage of C-terminal arginine or lysine residues from polypeptides.. Its function is as follows. Specifically removes C-terminal basic residues (Arg or Lys) from peptides and proteins. It is believed to play important roles in the control of peptide hormone and growth factor activity at the cell surface, and in the membrane-localized degradation of extracellular proteins. The polypeptide is Carboxypeptidase M (Cpm) (Mus musculus (Mouse)).